Here is a 335-residue protein sequence, read N- to C-terminus: Dehydration-responsive element-binding protein 2A (335 aa).

2 disordered regions span residues 1-32 (MAVYDQSGDRNRTQIDTSRKRKSRSRGDGTTV) and 50-74 (STKKRKVPAKGSKKGCMKGKGGPEN). The Nuclear localization signal signature appears at 19 to 55 (RKRKSRSRGDGTTVAERLKRWKEYNETVEEVSTKKRK). Basic residues predominate over residues 52–66 (KKRKVPAKGSKKGCM). Positions 78-135 (SFRGVRQRIWGKWVAEIREPNRGSRLWLGTFPTAQEAASAYDEAAKAMYGPLARLNFP) form a DNA-binding region, AP2/ERF. Residues 279-304 (QDRYPGNSVANGSYRPESQQSGFDPL) are disordered. The span at 286–304 (SVANGSYRPESQQSGFDPL) shows a compositional bias: polar residues.

This sequence belongs to the AP2/ERF transcription factor family. ERF subfamily. Interacts with MED25. Binds to DPB3-1 in the nucleus during heat-stress. Post-translationally, ubiquitinated by DRIP1 and DRIP2. Ubiquitination probably leads to its subsequent degradation, thus negatively regulating response to drought. In terms of tissue distribution, expressed preferentially in roots and stems, and at a lower level in leaves.

It localises to the nucleus. Transcriptional activator that binds specifically to the DNA sequence 5'-[AG]CCGAC-3'. Binding to the C-repeat/DRE element mediates high salinity- and dehydration-inducible transcription. Promotes the expression of heat stress-inducible genes by contributing to the formation of a heat stress-specific transcriptional complex with NF-Y subunits (e.g. DPB3-1, NF-YA2 and NF-YB3) at the promoter of target genes, thus promoting heat tolerance. The polypeptide is Dehydration-responsive element-binding protein 2A (Arabidopsis thaliana (Mouse-ear cress)).